Reading from the N-terminus, the 421-residue chain is AA11 family lytic polysaccharide monooxygenase (421 aa).

The signal sequence occupies residues 1-19; it reads MFSKAFLSAALLGAAAVEG. Residues histidine 20, histidine 79, and glutamate 93 each coordinate Cu(+). Disulfide bonds link cysteine 48–cysteine 162, cysteine 84–cysteine 110, and cysteine 201–cysteine 235. Residue asparagine 117 is glycosylated (N-linked (GlcNAc...) asparagine). Residues 231 to 349 are disordered; sequence GSQACTGTPT…SSSSSSSGAL (119 aa). Low complexity predominate over residues 247–285; the sequence is TAGSSGSSGSSSGSSSGGSSSSAAGSGATAPPAPAVSST. The span at 304 to 314 shows a compositional bias: polar residues; it reads SPAQPTHTSAP. A compositionally biased stretch (low complexity) spans 315–349; that stretch reads SGGSSSGSGSSSGSNSGSSSGSSSSSSSSSSSGAL.

This sequence belongs to the polysaccharide monooxygenase AA11 family. Requires Cu(2+) as cofactor.

Functionally, lytic polysaccharide monooxygenase (LPMO) that depolymerizes chitin via the oxidation of scissile beta-(1-4)-glycosidic bonds, yielding C1 or C4 oxidation products. Catalysis by LPMOs requires the reduction of the active-site copper from Cu(II) to Cu(I) by a reducing agent and H(2)O(2) or O(2) as a cosubstrate. Active on chitin but has no activity on other substrates, including diverse mannans, cellulose and starch (data not shown). Primary chain cleavage yields predominantly aldonic acid oligosaccharides with even-numbered degrees of polymerization. The protein is AA11 family lytic polysaccharide monooxygenase of Aspergillus oryzae (strain ATCC 42149 / RIB 40) (Yellow koji mold).